The sequence spans 227 residues: Cytochrome c oxidase subunit 2 (227 aa).

Residues 1–14 (MAHAAQVGLQDATS) lie on the Mitochondrial intermembrane side of the membrane. Residues 15-45 (PIMEELIIFHDHALMIIFLICFLVLYALFLT) form a helical membrane-spanning segment. The Mitochondrial matrix segment spans residues 46 to 59 (LTTKLTSTNISDAQ). The helical transmembrane segment at 60–87 (EMETVWTILPAIILVLIALPSLRILYMT) threads the bilayer. The Mitochondrial intermembrane segment spans residues 88–227 (DEINDPSFTI…IFEMGPVFTL (140 aa)). Residues His-161, Cys-196, Glu-198, Cys-200, His-204, and Met-207 each contribute to the Cu cation site. Mg(2+) is bound at residue Glu-198.

Belongs to the cytochrome c oxidase subunit 2 family. Component of the cytochrome c oxidase (complex IV, CIV), a multisubunit enzyme composed of 14 subunits. The complex is composed of a catalytic core of 3 subunits MT-CO1, MT-CO2 and MT-CO3, encoded in the mitochondrial DNA, and 11 supernumerary subunits COX4I, COX5A, COX5B, COX6A, COX6B, COX6C, COX7A, COX7B, COX7C, COX8 and NDUFA4, which are encoded in the nuclear genome. The complex exists as a monomer or a dimer and forms supercomplexes (SCs) in the inner mitochondrial membrane with NADH-ubiquinone oxidoreductase (complex I, CI) and ubiquinol-cytochrome c oxidoreductase (cytochrome b-c1 complex, complex III, CIII), resulting in different assemblies (supercomplex SCI(1)III(2)IV(1) and megacomplex MCI(2)III(2)IV(2)). Found in a complex with TMEM177, COA6, COX18, COX20, SCO1 and SCO2. Interacts with TMEM177 in a COX20-dependent manner. Interacts with COX20. Interacts with COX16. Requires Cu cation as cofactor.

It localises to the mitochondrion inner membrane. It carries out the reaction 4 Fe(II)-[cytochrome c] + O2 + 8 H(+)(in) = 4 Fe(III)-[cytochrome c] + 2 H2O + 4 H(+)(out). Functionally, component of the cytochrome c oxidase, the last enzyme in the mitochondrial electron transport chain which drives oxidative phosphorylation. The respiratory chain contains 3 multisubunit complexes succinate dehydrogenase (complex II, CII), ubiquinol-cytochrome c oxidoreductase (cytochrome b-c1 complex, complex III, CIII) and cytochrome c oxidase (complex IV, CIV), that cooperate to transfer electrons derived from NADH and succinate to molecular oxygen, creating an electrochemical gradient over the inner membrane that drives transmembrane transport and the ATP synthase. Cytochrome c oxidase is the component of the respiratory chain that catalyzes the reduction of oxygen to water. Electrons originating from reduced cytochrome c in the intermembrane space (IMS) are transferred via the dinuclear copper A center (CU(A)) of subunit 2 and heme A of subunit 1 to the active site in subunit 1, a binuclear center (BNC) formed by heme A3 and copper B (CU(B)). The BNC reduces molecular oxygen to 2 water molecules using 4 electrons from cytochrome c in the IMS and 4 protons from the mitochondrial matrix. The sequence is that of Cytochrome c oxidase subunit 2 (MT-CO2) from Gorilla gorilla beringei (Mountain gorilla).